Reading from the N-terminus, the 632-residue chain is MNRLGRMSLPLRSPACLICQTRTTTLIPSSWQTARSMATARLRRKVSRMALSPDVAKPSLNKDRKKRERPGPFAAMNQTEARIRDTPRTRSQAALKRSGDSKEEAQKKESPLYKALKMQTTLAPVPYGKRTAVKAKIADITSFDQFPLLPVVRNSIVSQALPGLMEVTPTPIQRLAIPKLLEESKPDKKPVKTDDDEPHYDQFLLAAETGSGKTLAYLLPVVDAVKRAEAVDKELEKKEEEEKAREREEKMKNKAFDIEPELPPLSNAGRPRAIILVPTSELVAQVGVKVKALSHTVKYRSGMISSNLTPRRIKNTLFHPDGIDILVATPHLLASIAKTEPYLLSRVSHLVLDEADSLLDRSFAPTTTEIISKVAPSLQKLILCSATIPRSLDNLLRKRYPDIKRLTTPNLHAIPRRVQLGVVDIEKDPYRGNRSLACADVIWSIGKAGDSEVSGPYSSFLEPKTKKILVFVNEREEADEVAQFLQSKGIDAHSLSRDSSARKQEEILAEFTEAPPPPSPDEIMLAQKQRRHEDPIPFEMPKRTNSGGSTRRLPNTKVLVTTDLTSRGIDTLAVKTVILYHVPHTTIDFIHRLGRLGRMGKRGRGVVLVGKKDRKDVVKEVREGMFRGQALI.

The transit peptide at 1–37 directs the protein to the mitochondrion; the sequence is MNRLGRMSLPLRSPACLICQTRTTTLIPSSWQTARSM. Positions 49–111 are disordered; sequence MALSPDVAKP…KEEAQKKESP (63 aa). Residues 97-111 are compositionally biased toward basic and acidic residues; it reads RSGDSKEEAQKKESP. A Q motif motif is present at residues 141 to 174; sequence TSFDQFPLLPVVRNSIVSQALPGLMEVTPTPIQR. Positions 194-406 constitute a Helicase ATP-binding domain; that stretch reads DDDEPHYDQF…RKRYPDIKRL (213 aa). Residue 207 to 214 participates in ATP binding; sequence AETGSGKT. The DEAD box motif lies at 353 to 356; sequence DEAD. One can recognise a Helicase C-terminal domain in the interval 460–632; sequence FLEPKTKKIL…EGMFRGQALI (173 aa).

The protein belongs to the DEAD box helicase family. MRH4 subfamily.

The protein localises to the mitochondrion. The catalysed reaction is ATP + H2O = ADP + phosphate + H(+). ATP-binding RNA helicase involved in mitochondrial RNA metabolism. Required for maintenance of mitochondrial DNA. The protein is ATP-dependent RNA helicase mrh4, mitochondrial (mrh4) of Aspergillus clavatus (strain ATCC 1007 / CBS 513.65 / DSM 816 / NCTC 3887 / NRRL 1 / QM 1276 / 107).